The primary structure comprises 223 residues: Probable glutathione S-transferase (223 aa).

The 80-residue stretch at Ala2 to Ser81 folds into the GST N-terminal domain. Residues Ser12, Lys39, Val53, and Glu65–Ser66 each bind glutathione. Residues Asp86–Phe212 form the GST C-terminal domain.

This sequence belongs to the GST superfamily. HSP26 family. Root tip-specific expression.

It carries out the reaction RX + glutathione = an S-substituted glutathione + a halide anion + H(+). This is Probable glutathione S-transferase from Nicotiana tabacum (Common tobacco).